We begin with the raw amino-acid sequence, 323 residues long: Lipoyl synthase (323 aa).

Residues C61, C66, C72, C87, C91, C94, and S300 each coordinate [4Fe-4S] cluster. The region spanning 73–289 (WDKKHATFMI…ETVAYTKGFL (217 aa)) is the Radical SAM core domain.

Belongs to the radical SAM superfamily. Lipoyl synthase family. Requires [4Fe-4S] cluster as cofactor.

It is found in the cytoplasm. The catalysed reaction is [[Fe-S] cluster scaffold protein carrying a second [4Fe-4S](2+) cluster] + N(6)-octanoyl-L-lysyl-[protein] + 2 oxidized [2Fe-2S]-[ferredoxin] + 2 S-adenosyl-L-methionine + 4 H(+) = [[Fe-S] cluster scaffold protein] + N(6)-[(R)-dihydrolipoyl]-L-lysyl-[protein] + 4 Fe(3+) + 2 hydrogen sulfide + 2 5'-deoxyadenosine + 2 L-methionine + 2 reduced [2Fe-2S]-[ferredoxin]. Its pathway is protein modification; protein lipoylation via endogenous pathway; protein N(6)-(lipoyl)lysine from octanoyl-[acyl-carrier-protein]: step 2/2. Functionally, catalyzes the radical-mediated insertion of two sulfur atoms into the C-6 and C-8 positions of the octanoyl moiety bound to the lipoyl domains of lipoate-dependent enzymes, thereby converting the octanoylated domains into lipoylated derivatives. This chain is Lipoyl synthase, found in Sinorhizobium medicae (strain WSM419) (Ensifer medicae).